The sequence spans 305 residues: Probable lipid kinase YegS-like (305 aa).

One can recognise a DAGKc domain in the interval 1–129 (MSERKALLIL…IDLGEVGGQI (129 aa)). ATP contacts are provided by residues threonine 39, 65-71 (GDGTLRD), and threonine 92. Leucine 210, aspartate 213, and leucine 215 together coordinate Mg(2+). Glutamate 268 functions as the Proton acceptor in the catalytic mechanism.

It belongs to the diacylglycerol/lipid kinase family. YegS lipid kinase subfamily. Requires Mg(2+) as cofactor. It depends on Ca(2+) as a cofactor.

The protein localises to the cytoplasm. In terms of biological role, probably phosphorylates lipids; the in vivo substrate is unknown. The protein is Probable lipid kinase YegS-like of Pseudomonas fluorescens (strain Pf0-1).